The primary structure comprises 195 residues: Porimin (195 aa).

Residues 1–23 (MALCARAALLLGVLQVLALLGAA) form the signal peptide. Residues 24–152 (QDPTDAQGSA…PTKGKGSKFD (129 aa)) are Extracellular-facing. Residues Asn36, Asn45, Asn51, Asn59, Asn109, and Asn115 are each glycosylated (N-linked (GlcNAc...) asparagine). The disordered stretch occupies residues 99–127 (VTPTASKSTPNASASPNSTHTSASMTTPA). A compositionally biased stretch (polar residues) spans 101-126 (PTASKSTPNASASPNSTHTSASMTTP). A helical transmembrane segment spans residues 153–173 (AGSFVGGIVLTLGVLSILYIG). The Cytoplasmic portion of the chain corresponds to 174–195 (CKMYYSRRGIRYRSIDEHDAII). Position 187 is a phosphoserine (Ser187).

The protein belongs to the CD164 family.

Its subcellular location is the membrane. In terms of biological role, implicated in oncotic cell death, characterized by cell swelling, organelle swelling, vacuolization and increased membrane permeability. The polypeptide is Porimin (Tmem123) (Mus musculus (Mouse)).